Consider the following 516-residue polypeptide: L-amino-acid oxidase (516 aa).

A signal peptide spans 1–18; that stretch reads MNVFFMFSLLFLAALGSC. Cysteines 28 and 191 form a disulfide. FAD-binding positions include 61–62, 81–82, R89, and 105–108; these read MA, EA, and GPMR. R108 provides a ligand contact to substrate. N190 carries N-linked (GlcNAc...) (complex) asparagine glycosylation. Residue H241 participates in substrate binding. V279 contributes to the FAD binding site. C349 and C430 form a disulfide bridge. Residue N379 is glycosylated (N-linked (GlcNAc...) (complex) asparagine). Y390 is a substrate binding site. FAD is bound by residues E475 and 482-487; that span reads GWIDST. Residue 482–483 coordinates substrate; it reads GW.

Homodimer; non-covalently linked. It depends on FAD as a cofactor. In terms of processing, N-glycosylated at Asn-190 and Asn-379 with bis-sialylated, biantennary, core-fucosylated dodecasaccharide (composed of N-acetylglucosamine, fucose, mannose, galactose, and sialic acid residues). As to expression, expressed by the venom gland.

The protein localises to the secreted. The enzyme catalyses an L-alpha-amino acid + O2 + H2O = a 2-oxocarboxylate + H2O2 + NH4(+). It carries out the reaction L-leucine + O2 + H2O = 4-methyl-2-oxopentanoate + H2O2 + NH4(+). It catalyses the reaction L-phenylalanine + O2 + H2O = 3-phenylpyruvate + H2O2 + NH4(+). The catalysed reaction is L-tryptophan + O2 + H2O = indole-3-pyruvate + H2O2 + NH4(+). The enzyme catalyses L-methionine + O2 + H2O = 4-methylsulfanyl-2-oxobutanoate + H2O2 + NH4(+). It carries out the reaction L-isoleucine + O2 + H2O = (S)-3-methyl-2-oxopentanoate + H2O2 + NH4(+). It catalyses the reaction L-arginine + O2 + H2O = 5-guanidino-2-oxopentanoate + H2O2 + NH4(+). The catalysed reaction is L-aspartate + O2 + H2O = oxaloacetate + H2O2 + NH4(+). The enzyme catalyses L-histidine + O2 + H2O = 3-(imidazol-5-yl)pyruvate + H2O2 + NH4(+). It carries out the reaction L-2-aminohexanoate + O2 + H2O = 2-oxohexanoate + H2O2 + NH4(+). It catalyses the reaction L-2-aminopentanoate + O2 + H2O = 2-oxopentanoate + H2O2 + NH4(+). Catalyzes an oxidative deamination of predominantly hydrophobic and aromatic L-amino acids, thus producing hydrogen peroxide that may contribute to the diverse toxic effects of this enzyme. Shows high affinity for L-Phe, L-Trp, L-Met, L-Leu, and L-Ile, moderate affinity for L-Arg, L-Asp, and L-His, and very low affinity for L-Gln, L-Lys, and L-Ala. Also shows high activity on L-norleucine (L-2-aminohexanoate), and L-norvaline (L-2-aminopentanoate) and a weak activity on L-ornithine and L-aminobutyric acid. Also exhibits diverse biological activities, such as hemorrhage, hemolysis, edema, apoptosis of vascular endothelial cells or tumor cell lines, and antiparasitic activities, as well as regulation of platelet aggregation. Its effect on platelets is controversial, since it either induces aggregation or inhibits agonist-induced aggregation. These different effects are probably due to different experimental conditions. A possible explanation of high efficacy it that LAAO may bind to target cells through its sialylated glycan moiety that would bind to sialic acid-binding lectins (siglec) on target cells. This interaction may result in production of locally high concentrations of hydrogen peroxide in or near the binding interface, leading, in turn to oxidative damage of the siglec or another adjacent cell structural elements. The sequence is that of L-amino-acid oxidase from Calloselasma rhodostoma (Malayan pit viper).